The chain runs to 254 residues: Zinc finger FYVE domain-containing protein 21 (254 aa).

The FYVE-type zinc finger occupies 44–104 (DKECPRCMQC…QCAGCAPVSR (61 aa)). Residues cysteine 50, cysteine 53, cysteine 66, cysteine 69, cysteine 74, cysteine 77, cysteine 96, and cysteine 99 each contribute to the Zn(2+) site. The interval 107-254 (ADFYDRQLKL…AKLLYESRDQ (148 aa)) is PH-like.

As to quaternary structure, interacts with PTK2/FAK1.

It localises to the cell junction. The protein resides in the focal adhesion. The protein localises to the cytoplasmic vesicle. Its subcellular location is the endosome. In terms of biological role, plays a role in cell adhesion, and thereby in cell motility which requires repeated formation and disassembly of focal adhesions. Regulates microtubule-induced PTK2/FAK1 dephosphorylation, an event important for focal adhesion disassembly, as well as integrin beta-1/ITGB1 cell surface expression. The sequence is that of Zinc finger FYVE domain-containing protein 21 (ZFYVE21) from Bos taurus (Bovine).